Reading from the N-terminus, the 82-residue chain is Putative ribonuclease VapC34 (82 aa).

D4 contributes to the Mg(2+) binding site.

This sequence belongs to the PINc/VapC protein family. Requires Mg(2+) as cofactor.

Toxic component of a possible type II toxin-antitoxin (TA) system. A putative RNase. Its cognate antitoxin is VapB34. This is Putative ribonuclease VapC34 (vapC34) from Mycobacterium tuberculosis (strain CDC 1551 / Oshkosh).